The primary structure comprises 332 residues: MATLKDQLIQNLLKEEHVPQNKITIVGVGAVGMACAISILMKDLADEVALVDVMEDKLKGEMMDLQHGSLFLRTPKIVSGKDYNVTANSRLVIITAGARQQEGESRLNLVQRNVNIFKFIIPNIVKYSPNCKLLVVSNPVDILTYVAWKISGFPKNRVIGSGCNLDSARFRYLMGERLGVHPLSCHGWILGEHGDSSVPVWSGVNVAGVSLKNLHPELGTDADKEQWKAVHKQVVDSAYEVIKLKGYTSWAIGLSVADLAESIMKNLRRVHPISTMIKGLYGIKEDVFLSVPCILGQNGISDVVKVTLTHEEEACLKKSADTLWGIQKELQF.

At alanine 2 the chain carries N-acetylalanine. Lysine 5 carries the N6-acetyllysine; alternate modification. Lysine 5 carries the N6-succinyllysine; alternate modification. Lysine 14 carries the post-translational modification N6-acetyllysine. 29-57 lines the NAD(+) pocket; sequence GAVGMACAISILMKDLADEVALVDVMEDK. The residue at position 57 (lysine 57) is an N6-acetyllysine; alternate. A Glycyl lysine isopeptide (Lys-Gly) (interchain with G-Cter in SUMO2); alternate cross-link involves residue lysine 57. Position 81 is an N6-acetyllysine (lysine 81). Arginine 106 serves as a coordination point for substrate. Lysine 118 bears the N6-acetyllysine; alternate mark. Lysine 118 is modified (N6-succinyllysine; alternate). Residue lysine 126 is modified to N6-acetyllysine. Asparagine 138 provides a ligand contact to NAD(+). Residues asparagine 138 and arginine 169 each contribute to the substrate site. Histidine 193 acts as the Proton acceptor in catalysis. N6-acetyllysine is present on residues lysine 224 and lysine 232. Tyrosine 239 bears the Phosphotyrosine mark. At lysine 243 the chain carries N6-acetyllysine. Threonine 248 lines the substrate pocket. Threonine 309 is subject to Phosphothreonine. Lysine 318 carries the post-translational modification N6-acetyllysine; alternate. Lysine 318 is subject to N6-succinyllysine; alternate. The residue at position 322 (threonine 322) is a Phosphothreonine.

This sequence belongs to the LDH/MDH superfamily. LDH family. As to quaternary structure, homotetramer. Interacts with PTEN upstream reading frame protein MP31. Post-translationally, ISGylated.

The protein resides in the cytoplasm. It carries out the reaction (S)-lactate + NAD(+) = pyruvate + NADH + H(+). Its pathway is fermentation; pyruvate fermentation to lactate; (S)-lactate from pyruvate: step 1/1. Its function is as follows. Interconverts simultaneously and stereospecifically pyruvate and lactate with concomitant interconversion of NADH and NAD(+). The sequence is that of L-lactate dehydrogenase A chain (LDHA) from Bos taurus (Bovine).